Here is a 588-residue protein sequence, read N- to C-terminus: MQTPKRRRGAQGCPRSSPSPPLLLLVRAVWFCAALSVAAGSFELTILHTNDVHARVEQTSRDSGKCTGQDCYGGVARRATKIRELRAKHRHVLLLDAGDQYQGTVWFNFFKGREVVKFMNSLRYDAMALGNHEFDNGLAGLLDPLLKHANFPILSANIRPKGSIASNISGYILPYKIINVGSEKVGIIGYTTKETPVLSNPGPYLEFRDEVEELQNHANKLTTLGVNKIIALGHSGFSEDQRIARKVKGVDVVVGGHTNTFLYTGSPPSTEVAAGNYPFMVQSDDGRQVPVVQAYAFGKYLGYLNVIFDDKGNVIKSSGNPILLNKDISEDQDIKAEVNKMKIQLHNYSSQEIGKTIVYLNGTTQACRFHECNLGNLICDAVIYNNVRHPDDNEWNHVSMCIVNGGGIRSPIDERTNNGTITLEELTAVLPFGGTFDLLQIKGSALKQAFEHSVHRHGEGMGELLQVSGIKVVYDLSRKPGSRVLSLNVLCTECRVPTYVPLEKEKTYKLLLPSFLAAGGDGYHMLKGDSSNHSSGNLDISIVGDYIKRMGKVFPAVEGRMIFSAGTLFQAQLFLTWGLCVSLLYFIL.

The N-terminal stretch at 1–40 (MQTPKRRRGAQGCPRSSPSPPLLLLVRAVWFCAALSVAAG) is a signal peptide. D51 and H53 together coordinate Zn(2+). A disulfide bond links C66 and C71. Residues D99 and N131 each coordinate Zn(2+). N167 carries an N-linked (GlcNAc...) asparagine glycan. Residues H234 and H257 each coordinate Zn(2+). Residues N347 and N361 are each glycosylated (N-linked (GlcNAc...) asparagine). Disulfide bonds link C367–C372 and C379–C401. R368 is an AMP binding site. AMP contacts are provided by N404 and R409. A glycan (N-linked (GlcNAc...) asparagine) is linked at N418. F432 serves as a coordination point for AMP. C491 and C494 are disulfide-bonded. AMP-binding residues include F515 and D521. N532 carries N-linked (GlcNAc...) asparagine glycosylation. S564 carries GPI-anchor amidated serine lipidation. The propeptide at 565-588 (AGTLFQAQLFLTWGLCVSLLYFIL) is removed in mature form.

Belongs to the 5'-nucleotidase family. Zn(2+) is required as a cofactor. Venom 5'-nucleotidases (or a part thereof) may be released into the venom via exosome-like vesicles. They may be attached via a GPI anchor to the membrane of these vesicles. Soluble forms of 5'-nucleotidase might be released by cleavage of the ectodomain in the exosome-like vesicles or venom gland cells. In terms of tissue distribution, expressed by the venom gland.

Its subcellular location is the membrane. It carries out the reaction a ribonucleoside 5'-phosphate + H2O = a ribonucleoside + phosphate. Functionally, hydrolyzes nucleotides into nucleosides. Snake venom 5'-nucleotidases are widely distributed among venomous snake taxa, but there is a lack of information about their biological activities. They have been shown to inhibit platelet aggregation. This effect may be due to the liberation of inhibitory AMP or adenosine by its action on ADP released upon initiation of aggregation. Venom 5'-nucleotidases are also known to synergistically act in vivo with other toxins like ADPases, phospholipases, and disintegrins to exert a more pronounced anti-coagulant effect. The polypeptide is Snake venom 5'-nucleotidase (Crotalus adamanteus (Eastern diamondback rattlesnake)).